A 155-amino-acid chain; its full sequence is Small ribosomal subunit protein uS17 (155 aa).

An N-acetylalanine modification is found at alanine 2.

The protein belongs to the universal ribosomal protein uS17 family.

This chain is Small ribosomal subunit protein uS17, found in Drosophila pseudoobscura pseudoobscura (Fruit fly).